The chain runs to 504 residues: Signal recognition particle subunit SRP54 (504 aa).

An NG domain region spans residues 1-295 (MVLADLGRKI…KTQPFISKLL (295 aa)). GTP contacts are provided by residues 108-115 (GLQGSGKT), 190-194 (DTSGR), and 248-251 (TKLD). The interval 296–504 (GMGDIEGLID…MKGMMGFNNM (209 aa)) is M-domain.

Belongs to the GTP-binding SRP family. SRP54 subfamily. In terms of assembly, component of a signal recognition particle (SRP) complex that consists of a 7SL RNA molecule of 300 nucleotides and six protein subunits: SRP72, SRP68, SRP54, SRP19, SRP14 and SRP9. Interacts with RNPS1. Interacts with the SRP receptor subunit SRPRA.

The protein localises to the nucleus speckle. It is found in the cytoplasm. It localises to the endoplasmic reticulum. It carries out the reaction GTP + H2O = GDP + phosphate + H(+). In terms of biological role, component of the signal recognition particle (SRP) complex, a ribonucleoprotein complex that mediates the cotranslational targeting of secretory and membrane proteins to the endoplasmic reticulum (ER). As part of the SRP complex, associates with the SRP receptor (SR) component SRPRA to target secretory proteins to the endoplasmic reticulum membrane. Binds to the signal sequence of presecretory proteins when they emerge from the ribosomes. Displays basal GTPase activity, and stimulates reciprocal GTPase activation of the SR subunit SRPRA. Forms a guanosine 5'-triphosphate (GTP)-dependent complex with the SR subunit SRPRA. SR compaction and GTPase mediated rearrangement of SR drive SRP-mediated cotranslational protein translocation into the ER. Requires the presence of SRP9/SRP14 and/or SRP19 to stably interact with RNA. Plays a role in proliferation and differentiation of granulocytic cells, neutrophils migration capacity and exocrine pancreas development. The polypeptide is Signal recognition particle subunit SRP54 (Homo sapiens (Human)).